The sequence spans 145 residues: 3-hydroxyacyl-[acyl-carrier-protein] dehydratase FabZ (145 aa).

The active site involves H47.

The protein belongs to the thioester dehydratase family. FabZ subfamily.

The protein resides in the cytoplasm. The catalysed reaction is a (3R)-hydroxyacyl-[ACP] = a (2E)-enoyl-[ACP] + H2O. Functionally, involved in unsaturated fatty acids biosynthesis. Catalyzes the dehydration of short chain beta-hydroxyacyl-ACPs and long chain saturated and unsaturated beta-hydroxyacyl-ACPs. The sequence is that of 3-hydroxyacyl-[acyl-carrier-protein] dehydratase FabZ from Thiobacillus denitrificans (strain ATCC 25259 / T1).